Reading from the N-terminus, the 201-residue chain is ATP-dependent Clp protease proteolytic subunit (201 aa).

Residue serine 98 is the Nucleophile of the active site. Histidine 123 is an active-site residue.

It belongs to the peptidase S14 family. As to quaternary structure, fourteen ClpP subunits assemble into 2 heptameric rings which stack back to back to give a disk-like structure with a central cavity, resembling the structure of eukaryotic proteasomes.

Its subcellular location is the cytoplasm. It catalyses the reaction Hydrolysis of proteins to small peptides in the presence of ATP and magnesium. alpha-casein is the usual test substrate. In the absence of ATP, only oligopeptides shorter than five residues are hydrolyzed (such as succinyl-Leu-Tyr-|-NHMec, and Leu-Tyr-Leu-|-Tyr-Trp, in which cleavage of the -Tyr-|-Leu- and -Tyr-|-Trp bonds also occurs).. Cleaves peptides in various proteins in a process that requires ATP hydrolysis. Has a chymotrypsin-like activity. Plays a major role in the degradation of misfolded proteins. The sequence is that of ATP-dependent Clp protease proteolytic subunit from Neorickettsia sennetsu (strain ATCC VR-367 / Miyayama) (Ehrlichia sennetsu).